Here is an 806-residue protein sequence, read N- to C-terminus: Lysine-specific demethylase JMJ15 (806 aa).

The interval 1 to 43 (MEPFSAAQNKEDKDTSVEPPRRRCHRKNKGTNVEPPSSPYHPK) is disordered. Residues 9 to 21 (NKEDKDTSVEPPR) show a composition bias toward basic and acidic residues. Positions 61-102 (APVFHPTSEEFEDTLAYIEKIRPLAESFGICRIVPPSNWSPP) constitute a JmjN domain. A disordered region spans residues 128-176 (NRGPVKKKTPKGRKRKRGKYSRTVAPKKRNGSVSKSVSTPKATEEENFG). Positions 131–157 (PVKKKTPKGRKRKRGKYSRTVAPKKRN) are enriched in basic residues. The Nuclear localization signal signature appears at 132–139 (VKKKTPKG). The segment covering 158 to 168 (GSVSKSVSTPK) has biased composition (polar residues). Residues 261–427 (KYISSGWNLN…HGQNAVEIYS (167 aa)) form the JmjC domain. Residues His307, Glu309, and His395 each contribute to the Fe cation site. Positions 514, 517, 528, 531, 539, 542, 545, and 547 each coordinate Zn(2+). A C5HC2 zinc finger spans residues 514 to 566 (CISCFSDLHLSATGCKNCSSLEEYGCTKHDICSCEGKDRFIFLRYTIDELSSL). In terms of domain architecture, FYR N-terminal spans 629 to 687 (IMDLAAYHVEPINLGFLVVGKLWCNKHAIFPKGFKSRVKFYNVQDPMRISYYVSEIVDA). The FYR C-terminal domain maps to 689 to 775 (LLGPLFKVTL…HGQVEYWNHK (87 aa)).

It belongs to the JARID1 histone demethylase family. Requires Fe(2+) as cofactor. In terms of tissue distribution, expressed in roots, cotyledons, shoot apex, rosette and cauline leaves, stems, inflorescences and siliques. Expressed at low levels during vegetative growth but to higher levels in young floral organs.

It localises to the nucleus. The catalysed reaction is N(6),N(6),N(6)-trimethyl-L-lysyl(4)-[histone H3] + 2-oxoglutarate + O2 = N(6),N(6)-dimethyl-L-lysyl(4)-[histone H3] + formaldehyde + succinate + CO2. Its function is as follows. Histone demethylase that demethylates 'Lys-4' (H3K4me) of histone H3 with a specific activity for H3K4me3. No activity on H3K4me2, H3K4me1, H3K9me3/2, H3K27me3/2 and H3K36me3/2. Involved in the control of flowering time by demethylating H3K4me3 at the FLC locus and repressing its expression. The repression of FLC level and reduction in H3K4me3 at the FLC locus results in induction of the flowering activator FT, which is a downstream target of FLC. Promotes salt tolerance by down-regulating the expression of several transcriptions factors involved in stress responses via H3K4me3 and H3K4me2 demethylation. This is Lysine-specific demethylase JMJ15 from Arabidopsis thaliana (Mouse-ear cress).